A 631-amino-acid chain; its full sequence is MSATKLTRREQRTQAQHFIDTLEGTAFPNSKRIYITGTHPGVRVPMREIQLSPTLIGGSKEQPQFEENEAIPVYDTSGPYGDPQIAINVQQGLAKLRQPWIDARGDTEELTVRSSDYTKARLADDGLDELRFSGLLTPKRAKTGRRVTQLHYARQGIITPEMEFIAIRENMGRERIRSEVLRHQHPGMSFGARLPENITAEFVRDEVAAGRAIIPANINHPESEPMIIGRNFLVKVNANIGNSAVTSSIEEEVEKLVWSTRWGADTVMDLSTGRYIHETREWILRNSPVPIGTVPIYQALEKVNGIAEDLTWEAFRDTLLEQAEQGVDYFTIHAGVLLRYVPMTAKRLTGIVSRGGSIMAKWCLSHHQENFLYQHFREICEICAAYDVSLSLGDGLRPGSVQDANDEAQFAELHTLGELTKIAWEYDVQVMIEGPGHVPMQMIRRNMTEELEHCHEAPFYTLGPLTTDIAPGYDHFTSGIGAAMIGWFGCAMLCYVTPKEHLGLPNKEDVKQGLITYKIAAHAADLAKGHPGAQIRDNAMSKARFEFRWEDQFNLALDPFTARAYHDETLPQESGKVAHFCSMCGPKFCSMRISQEVRDYAAAQTIEVGMADMSENFRARGGEIYLRKEEA.

Residues Asn239, Met268, Tyr297, His333, 353–355, 394–397, and Glu433 each bind substrate; these read SRG and DGLR. His437 lines the Zn(2+) pocket. Tyr460 lines the substrate pocket. Position 501 (His501) interacts with Zn(2+). 3 residues coordinate [4Fe-4S] cluster: Cys581, Cys584, and Cys589.

This sequence belongs to the ThiC family. As to quaternary structure, homodimer. Requires [4Fe-4S] cluster as cofactor.

The enzyme catalyses 5-amino-1-(5-phospho-beta-D-ribosyl)imidazole + S-adenosyl-L-methionine = 4-amino-2-methyl-5-(phosphooxymethyl)pyrimidine + CO + 5'-deoxyadenosine + formate + L-methionine + 3 H(+). It functions in the pathway cofactor biosynthesis; thiamine diphosphate biosynthesis. Functionally, catalyzes the synthesis of the hydroxymethylpyrimidine phosphate (HMP-P) moiety of thiamine from aminoimidazole ribotide (AIR) in a radical S-adenosyl-L-methionine (SAM)-dependent reaction. The polypeptide is Phosphomethylpyrimidine synthase (Escherichia coli O7:K1 (strain IAI39 / ExPEC)).